A 264-amino-acid polypeptide reads, in one-letter code: Ion-translocating oxidoreductase complex subunit B (264 aa).

The chain crosses the membrane as a helical span at residues 5–25 (LINSIAVLAGLGFAVGVMLVI). Residues 33–92 (DSNPLIDDVASLLPGANCGGCGFAGCAACAEAIVEQGAPVNSCPVGGFEVAKQIGALLGQ) enclose the 4Fe-4S domain. Residues C50, C53, C58, C75, C138, C142, C148, C152, C172, C175, C178, C182, C217, C220, C223, C227, C246, C249, C252, and C256 each contribute to the [4Fe-4S] cluster site. 4Fe-4S ferredoxin-type domains lie at 127–162 (VALMLCDSRKGCTYGCLGLGTCVQACQFGALSMGED), 163–192 (GFPVVNKALCTSCGNCIAACPNGVLTFARD), 207–236 (KDVKAVCEVGCIGCKKCEKECPAGAIRVTE), and 237–264 (FLAEIDQEKCTACGACVAICPQKAIELR).

It belongs to the 4Fe4S bacterial-type ferredoxin family. RnfB subfamily. As to quaternary structure, the Rnf complex is probably composed of eight subunits, including RnfA, RnfB, RnfC, RnfD, RnfE and RnfG. Requires [4Fe-4S] cluster as cofactor.

The protein resides in the cell membrane. In terms of biological role, part of a membrane-bound complex that couples electron transfer with translocation of ions across the membrane. Catalyzes Na(+) transport, most probably coupled to electron transfer from reduced ferredoxin to methanophenazine and heterodisulfide reductase. Involved in heterodisulfide reduction during methanogenesis from acetate. This is Ion-translocating oxidoreductase complex subunit B from Methanosarcina acetivorans (strain ATCC 35395 / DSM 2834 / JCM 12185 / C2A).